An 89-amino-acid chain; its full sequence is Small ribosomal subunit protein uS15 (89 aa).

Belongs to the universal ribosomal protein uS15 family. As to quaternary structure, part of the 30S ribosomal subunit. Forms a bridge to the 50S subunit in the 70S ribosome, contacting the 23S rRNA.

Functionally, one of the primary rRNA binding proteins, it binds directly to 16S rRNA where it helps nucleate assembly of the platform of the 30S subunit by binding and bridging several RNA helices of the 16S rRNA. Forms an intersubunit bridge (bridge B4) with the 23S rRNA of the 50S subunit in the ribosome. This is Small ribosomal subunit protein uS15 from Gloeothece citriformis (strain PCC 7424) (Cyanothece sp. (strain PCC 7424)).